A 421-amino-acid polypeptide reads, in one-letter code: Medium-chain specific acyl-CoA dehydrogenase, mitochondrial (421 aa).

A mitochondrion-targeting transit peptide spans 1–25 (MIALFRRSCGVLRSLSHFDWRSQHT). Position 69 is an N6-acetyllysine; alternate (K69). The residue at position 69 (K69) is an N6-succinyllysine; alternate. K79 carries the post-translational modification N6-acetyllysine. 158-167 (YCVTEPVAGS) contributes to the FAD binding site. S167 serves as a coordination point for octanoyl-CoA. Residue K179 is modified to N6-succinyllysine. 191–193 (WIT) is a binding site for FAD. An N6-acetyllysine; alternate modification is found at K212. K212 carries the post-translational modification N6-succinyllysine; alternate. S216 contacts octanoyl-CoA. 3 positions are modified to N6-acetyllysine; alternate: K217, K259, and K271. Residues K217, K259, and K271 each carry the N6-succinyllysine; alternate modification. Octanoyl-CoA is bound at residue D278. The residue at position 279 (K279) is an N6-acetyllysine. R281 is a binding site for octanoyl-CoA. K301 is subject to N6-acetyllysine. FAD contacts are provided by residues 306-308 (RKT) and 316-317 (HQ). Octanoyl-CoA-binding residues include R349 and T351. T351 is subject to Phosphothreonine. 374 to 378 (QIFGG) lines the FAD pocket. An octanoyl-CoA-binding site is contributed by E401. The active-site Proton acceptor is the E401. FAD is bound at residue 402–405 (GTAQ).

It belongs to the acyl-CoA dehydrogenase family. Homotetramer. Interacts with the heterodimeric electron transfer flavoprotein ETF. FAD is required as a cofactor. Post-translationally, acetylated. Could occur at proximity of the cofactor-binding sites and reduce the catalytic activity. Could be deacetylated by SIRT3.

The protein resides in the mitochondrion matrix. The enzyme catalyses a medium-chain 2,3-saturated fatty acyl-CoA + oxidized [electron-transfer flavoprotein] + H(+) = a medium-chain (2E)-enoyl-CoA + reduced [electron-transfer flavoprotein]. It catalyses the reaction pentanoyl-CoA + oxidized [electron-transfer flavoprotein] + H(+) = (2E)-pentenoyl-CoA + reduced [electron-transfer flavoprotein]. The catalysed reaction is hexanoyl-CoA + oxidized [electron-transfer flavoprotein] + H(+) = (2E)-hexenoyl-CoA + reduced [electron-transfer flavoprotein]. It carries out the reaction octanoyl-CoA + oxidized [electron-transfer flavoprotein] + H(+) = (2E)-octenoyl-CoA + reduced [electron-transfer flavoprotein]. The enzyme catalyses decanoyl-CoA + oxidized [electron-transfer flavoprotein] + H(+) = (2E)-decenoyl-CoA + reduced [electron-transfer flavoprotein]. It catalyses the reaction dodecanoyl-CoA + oxidized [electron-transfer flavoprotein] + H(+) = (2E)-dodecenoyl-CoA + reduced [electron-transfer flavoprotein]. The catalysed reaction is tetradecanoyl-CoA + oxidized [electron-transfer flavoprotein] + H(+) = (2E)-tetradecenoyl-CoA + reduced [electron-transfer flavoprotein]. It carries out the reaction oxidized [electron-transfer flavoprotein] + hexadecanoyl-CoA + H(+) = (2E)-hexadecenoyl-CoA + reduced [electron-transfer flavoprotein]. It participates in lipid metabolism; mitochondrial fatty acid beta-oxidation. In terms of biological role, medium-chain specific acyl-CoA dehydrogenase is one of the acyl-CoA dehydrogenases that catalyze the first step of mitochondrial fatty acid beta-oxidation, an aerobic process breaking down fatty acids into acetyl-CoA and allowing the production of energy from fats. The first step of fatty acid beta-oxidation consists in the removal of one hydrogen from C-2 and C-3 of the straight-chain fatty acyl-CoA thioester, resulting in the formation of trans-2-enoyl-CoA. Electron transfer flavoprotein (ETF) is the electron acceptor that transfers electrons to the main mitochondrial respiratory chain via ETF-ubiquinone oxidoreductase (ETF dehydrogenase). Among the different mitochondrial acyl-CoA dehydrogenases, medium-chain specific acyl-CoA dehydrogenase acts specifically on acyl-CoAs with saturated 6 to 12 carbons long primary chains. This Bos taurus (Bovine) protein is Medium-chain specific acyl-CoA dehydrogenase, mitochondrial.